Here is a 403-residue protein sequence, read N- to C-terminus: Acetate kinase (403 aa).

Asparagine 8 is a Mg(2+) binding site. Lysine 15 is a binding site for ATP. Position 90 (arginine 90) interacts with substrate. Aspartate 147 functions as the Proton donor/acceptor in the catalytic mechanism. ATP contacts are provided by residues 207–211 (HLGSG), 282–284 (DLR), and 330–334 (GVGEN). Glutamate 384 contributes to the Mg(2+) binding site.

The protein belongs to the acetokinase family. In terms of assembly, homodimer. Requires Mg(2+) as cofactor. It depends on Mn(2+) as a cofactor.

It localises to the cytoplasm. The catalysed reaction is acetate + ATP = acetyl phosphate + ADP. It functions in the pathway metabolic intermediate biosynthesis; acetyl-CoA biosynthesis; acetyl-CoA from acetate: step 1/2. Its function is as follows. Catalyzes the formation of acetyl phosphate from acetate and ATP. Can also catalyze the reverse reaction. This chain is Acetate kinase, found in Exiguobacterium sibiricum (strain DSM 17290 / CCUG 55495 / CIP 109462 / JCM 13490 / 255-15).